A 242-amino-acid chain; its full sequence is Small ribosomal subunit protein uS3 (242 aa).

Residues 39 to 110 (IRRFIHKKYG…QVRINVVEVE (72 aa)) enclose the KH type-2 domain. The tract at residues 216–242 (QSMPVGASPRRRGNRRPQQFEDRSNEG) is disordered. Residues 233 to 242 (QQFEDRSNEG) show a composition bias toward basic and acidic residues.

This sequence belongs to the universal ribosomal protein uS3 family. Part of the 30S ribosomal subunit. Forms a tight complex with proteins S10 and S14.

Functionally, binds the lower part of the 30S subunit head. Binds mRNA in the 70S ribosome, positioning it for translation. The sequence is that of Small ribosomal subunit protein uS3 from Prochlorococcus marinus (strain MIT 9303).